A 218-amino-acid chain; its full sequence is Glutathione S-transferase Mu 7 (218 aa).

One can recognise a GST N-terminal domain in the interval 1 to 88 (MPMTLGYWDI…YLGRKHNLCG (88 aa)). Residues 7-8 (YW), 46-50 (WLNEK), 59-60 (NL), and 72-73 (QS) each bind glutathione. One can recognise a GST C-terminal domain in the interval 90–208 (TEEERIRVDI…KTSRFLPRPM (119 aa)). Residue Tyr-116 coordinates substrate.

The protein belongs to the GST superfamily. Mu family. As to quaternary structure, homodimer.

It localises to the cytoplasm. The enzyme catalyses RX + glutathione = an S-substituted glutathione + a halide anion + H(+). In terms of biological role, conjugation of reduced glutathione to a wide number of exogenous and endogenous hydrophobic electrophiles. This is Glutathione S-transferase Mu 7 (Gstm7) from Mus musculus (Mouse).